Here is a 65-residue protein sequence, read N- to C-terminus: Large ribosomal subunit protein bL35 (65 aa).

The tract at residues M1 to P52 is disordered. Residues Q26 to L44 show a composition bias toward basic residues.

This sequence belongs to the bacterial ribosomal protein bL35 family.

The polypeptide is Large ribosomal subunit protein bL35 (Methylococcus capsulatus (strain ATCC 33009 / NCIMB 11132 / Bath)).